Reading from the N-terminus, the 420-residue chain is tRNA (guanine-N(7)-)-methyltransferase non-catalytic subunit TRM82 (420 aa).

Positions 59-68 (KENDSKRQKS) are enriched in basic and acidic residues. A disordered region spans residues 59-82 (KENDSKRQKSESGQAKVSKIPTPG). WD repeat units lie at residues 87–127 (PIYN…DNCL), 179–220 (GHVS…VIKN), 224–266 (GHHE…AKIE), and 340–379 (SYED…EETN).

The protein belongs to the WD repeat TRM82 family. Forms a heterodimer with the catalytic subunit TRM8.

The protein localises to the nucleus. It functions in the pathway tRNA modification; N(7)-methylguanine-tRNA biosynthesis. Its function is as follows. Required for the formation of N(7)-methylguanine at position 46 (m7G46) in tRNA. In the complex, it is required to stabilize and induce conformational changes of the catalytic subunit. The polypeptide is tRNA (guanine-N(7)-)-methyltransferase non-catalytic subunit TRM82 (Meyerozyma guilliermondii (strain ATCC 6260 / CBS 566 / DSM 6381 / JCM 1539 / NBRC 10279 / NRRL Y-324) (Yeast)).